The following is a 425-amino-acid chain: UDP-N-acetylglucosamine 1-carboxyvinyltransferase (425 aa).

22–23 is a binding site for phosphoenolpyruvate; that stretch reads KN. R98 is a UDP-N-acetyl-alpha-D-glucosamine binding site. C122 (proton donor) is an active-site residue. The residue at position 122 (C122) is a 2-(S-cysteinyl)pyruvic acid O-phosphothioketal. UDP-N-acetyl-alpha-D-glucosamine is bound by residues 127 to 131, D313, and I335; that span reads RPVDQ.

This sequence belongs to the EPSP synthase family. MurA subfamily.

The protein resides in the cytoplasm. It carries out the reaction phosphoenolpyruvate + UDP-N-acetyl-alpha-D-glucosamine = UDP-N-acetyl-3-O-(1-carboxyvinyl)-alpha-D-glucosamine + phosphate. The protein operates within cell wall biogenesis; peptidoglycan biosynthesis. In terms of biological role, cell wall formation. Adds enolpyruvyl to UDP-N-acetylglucosamine. The chain is UDP-N-acetylglucosamine 1-carboxyvinyltransferase from Xylella fastidiosa (strain 9a5c).